Consider the following 309-residue polypeptide: Foldase protein PrsA 2 (309 aa).

The signal sequence occupies residues 1–20; the sequence is MKYRLIGVGASLVVAVMLTG. Residue cysteine 21 is the site of N-palmitoyl cysteine attachment. Cysteine 21 is lipidated: S-diacylglycerol cysteine. The region spanning 137–232 is the PpiC domain; it reads MPMTTVQHIA…TADTKDKPTY (96 aa).

Belongs to the PrsA family.

Its subcellular location is the cell membrane. It carries out the reaction [protein]-peptidylproline (omega=180) = [protein]-peptidylproline (omega=0). Functionally, plays a major role in protein secretion by helping the post-translocational extracellular folding of several secreted proteins. This chain is Foldase protein PrsA 2 (prsA2), found in Lactiplantibacillus plantarum (strain ATCC BAA-793 / NCIMB 8826 / WCFS1) (Lactobacillus plantarum).